The chain runs to 510 residues: Protein phosphatase EYA3 (510 aa).

2 disordered regions span residues 1–32 (MQEP…SNLS) and 175–233 (YQTE…DASS). A compositionally biased stretch (polar residues) spans 7–16 (QTLSQVNNPD). Residues 192–203 (LPSDSSASPPLS) show a composition bias toward low complexity. Phosphoserine is present on residues serine 199 and serine 203. Aspartate 246 functions as the Nucleophile in the catalytic mechanism. Mg(2+)-binding residues include aspartate 246 and aspartate 248. Aspartate 248 (proton donor) is an active-site residue. 2 positions are modified to phosphoserine: serine 375 and serine 409. Aspartate 474 is a binding site for Mg(2+).

It belongs to the HAD-like hydrolase superfamily. EYA family. As to quaternary structure, interacts with SIX1 and DACH1, and probably SIX2, SIX4 and SIX5. It depends on Mg(2+) as a cofactor. Ser-203 phosphorylation is required for localization at sites of DNA damage and directing interaction with H2AX. In terms of tissue distribution, expressed in branchial arches, CNS and developing eye.

It is found in the cytoplasm. It localises to the nucleus. It catalyses the reaction O-phospho-L-tyrosyl-[protein] + H2O = L-tyrosyl-[protein] + phosphate. Its function is as follows. Tyrosine phosphatase that specifically dephosphorylates 'Tyr-142' of histone H2AX (H2AXY142ph). 'Tyr-142' phosphorylation of histone H2AX plays a central role in DNA repair and acts as a mark that distinguishes between apoptotic and repair responses to genotoxic stress. Promotes efficient DNA repair by dephosphorylating H2AX, promoting the recruitment of DNA repair complexes containing MDC1. Its function as histone phosphatase probably explains its role in transcription regulation during organogenesis. The phosphatase activity has been shown in vitro. Coactivates SIX1. Seems to coactivate SIX2, SIX4 and SIX5. The repression of precursor cell proliferation in myoblasts by SIX1 is switched to activation through recruitment of EYA3 to the SIX1-DACH1 complex and seems to be dependent on EYA3 phosphatase activity. May be involved in development of the eye. May play a role in mediating the induction and differentiation of cranial placodes. This is Protein phosphatase EYA3 (Eya3) from Mus musculus (Mouse).